The following is a 189-amino-acid chain: dCTP deaminase (189 aa).

DCTP contacts are provided by residues 112–117 (KSTYAR), 136–138 (TLE), Gln157, Tyr171, and Gln181. Glu138 (proton donor/acceptor) is an active-site residue.

It belongs to the dCTP deaminase family. Homotrimer.

It carries out the reaction dCTP + H2O + H(+) = dUTP + NH4(+). It functions in the pathway pyrimidine metabolism; dUMP biosynthesis; dUMP from dCTP (dUTP route): step 1/2. In terms of biological role, catalyzes the deamination of dCTP to dUTP. The polypeptide is dCTP deaminase (Xanthomonas campestris pv. campestris (strain 8004)).